The sequence spans 507 residues: MFS-type transporter acdC (507 aa).

The interval 1–50 (MSPNAPAVDIGAAPSLDTPEGDTKQPAEDHVEKDSNLVDWDGPDDPEHPQ) is disordered. The segment covering 21–36 (GDTKQPAEDHVEKDSN) has biased composition (basic and acidic residues). Asn51 carries N-linked (GlcNAc...) asparagine glycosylation. A helical membrane pass occupies residues 58-78 (WGITFSLASMTMWITFSSSVL). An N-linked (GlcNAc...) asparagine glycan is attached at Asn90. 5 consecutive transmembrane segments (helical) span residues 95–115 (VMPL…LCWA), 125–145 (LPTF…AVAP), 155–175 (FFVG…MADI), 186–206 (PFFF…GGFI), and 215–235 (WTAW…LLIV). The N-linked (GlcNAc...) asparagine glycan is linked to Asn257. A run of 6 helical transmembrane segments spans residues 290 to 310 (PILI…YLFL), 328 to 348 (IAGL…GIII), 371 to 391 (LVEM…FGWA), 395 to 415 (HWMV…VLFM), 442 to 462 (FLGG…GVDW), and 466 to 486 (ILGF…IFGA).

The protein belongs to the major facilitator superfamily. CAR1 family.

Its subcellular location is the membrane. Functionally, MFS-type transporter; part of the gene cluster that mediates the biosynthesis of aspcandine, a pyrrolobenzazepine alkaloid. The polypeptide is MFS-type transporter acdC (Aspergillus candidus).